A 381-amino-acid polypeptide reads, in one-letter code: Opsin-1 (381 aa).

At 1–53 (MASASLISEPSFSAYWGGSGGFANQTVVDKVPPEMLYLVDPHWYQFPPMNPLW) the chain is on the extracellular side. N24 carries N-linked (GlcNAc...) asparagine glycosylation. Residues 54–78 (HGLLGFVIGVLGVISVIGNGMVIYI) traverse the membrane as a helical segment. The Cytoplasmic portion of the chain corresponds to 79-90 (FSTTKSLRTPSN). The chain crosses the membrane as a helical span at residues 91 to 115 (LLVVNLAFSDFLMMFTMSAPMGINC). Topologically, residues 116-130 (YYETWVLGPFMCELY) are extracellular. C127 and C204 are disulfide-bonded. A helical transmembrane segment spans residues 131-150 (ALFGSLFGCGSIWTMTMIAL). The Cytoplasmic portion of the chain corresponds to 151–169 (DRYNVIVKGLSAKPMTNKT). The helical transmembrane segment at 170–193 (AMLRILFIWAFSVAWTIMPLFGWN) threads the bilayer. At 194 to 217 (RYVPEGNMTACGTDYLTKDWVSRS) the chain is on the extracellular side. The N-linked (GlcNAc...) asparagine glycan is linked to N200. A helical membrane pass occupies residues 218 to 245 (YILVYSFFVYLLPLGTIIYSYFFILQAV). The Cytoplasmic segment spans residues 246 to 280 (SAHEKQMREQRKKMNVASLRSAEASQTSAECKLAK). Residues 281–304 (VALMTISLWFFGWTPYLIINFTGI) form a helical membrane-spanning segment. Over 305–311 (FETMKIS) the chain is Extracellular. A helical membrane pass occupies residues 312–336 (PLLTIWGSLFAKANAVFNPIVYGIS). K323 carries the post-translational modification N6-(retinylidene)lysine. At 337–381 (HPKYRAALEKKFPSLACASSSDDNTSVASGATTVSDEKSEKSASA) the chain is on the cytoplasmic side. A compositionally biased stretch (polar residues) spans 354-370 (ASSSDDNTSVASGATTV). A disordered region spans residues 354 to 381 (ASSSDDNTSVASGATTVSDEKSEKSASA). Positions 371 to 381 (SDEKSEKSASA) are enriched in basic and acidic residues.

Belongs to the G-protein coupled receptor 1 family. Opsin subfamily. Post-translationally, phosphorylated on some or all of the serine and threonine residues present in the C-terminal region.

Its subcellular location is the cell projection. It localises to the rhabdomere membrane. Its function is as follows. Visual pigments are the light-absorbing molecules that mediate vision. They consist of an apoprotein, opsin, covalently linked to cis-retinal. The polypeptide is Opsin-1 (Lo1) (Schistocerca gregaria (Desert locust)).